The chain runs to 249 residues: DNA repair protein RecO (249 aa).

The protein belongs to the RecO family.

Functionally, involved in DNA repair and RecF pathway recombination. The chain is DNA repair protein RecO from Mycoplasma mycoides subsp. mycoides SC (strain CCUG 32753 / NCTC 10114 / PG1).